A 409-amino-acid polypeptide reads, in one-letter code: Effector protein BipC (409 aa).

2 disordered regions span residues 268–287 (RETG…RMSD) and 330–396 (SGGQ…VAND). A compositionally biased stretch (low complexity) spans 360-369 (AQQTAMAAAS). The segment covering 370–382 (ARDEAAHRGRDAA) has biased composition (basic and acidic residues).

This sequence belongs to the SctB/SipC family.

It localises to the secreted. The polypeptide is Effector protein BipC (bipC) (Burkholderia thailandensis (strain ATCC 700388 / DSM 13276 / CCUG 48851 / CIP 106301 / E264)).